A 183-amino-acid chain; its full sequence is Mid1-interacting protein 1 (183 aa).

Methionine 1 is subject to N-acetylmethionine. Residues serine 75 and serine 79 each carry the phosphoserine modification.

The protein belongs to the SPOT14 family. Homodimer in the absence of THRSP. Heterodimer with THRSP. The homodimer interacts with ACACA and ACACB. Promotes polymerization of Acetyl-CoA carboxylase to form complexes that contain MID1IP1 and ACACA and/or ACACB. Interaction with THRSP interferes with ACACA binding.

It is found in the nucleus. It localises to the cytoplasm. Its subcellular location is the cytoskeleton. Its function is as follows. Plays a role in the regulation of lipogenesis in liver. Up-regulates ACACA enzyme activity. Required for efficient lipid biosynthesis, including triacylglycerol, diacylglycerol and phospholipid. Involved in stabilization of microtubules. This is Mid1-interacting protein 1 (MID1IP1) from Homo sapiens (Human).